The primary structure comprises 253 residues: MICOS complex subunit mic25 (253 aa).

Positions 1 to 89 (MGGSESTGRK…GAHKPTAAGV (89 aa)) are disordered. Glycine 2 carries N-myristoyl glycine lipidation. Over residues 28-44 (RLSDEVVNRMKDSDLPS) the composition is skewed to basic and acidic residues. Low complexity predominate over residues 48 to 64 (STSAASGTASAPAAFPS). Residues 94–178 (AEEDLYRRYE…EQLSSIEKKN (85 aa)) are a coiled coil. Residues 206-248 (DPVCMNLQADILKCYSENKQERLNCSNLAKEYRKCVSAAQKNL) form the CHCH domain. 2 consecutive short sequence motifs (cx9C motif) follow at residues 209–219 (CMNLQADILKC) and 230–240 (CSNLAKEYRKC). 2 disulfides stabilise this stretch: cysteine 209–cysteine 240 and cysteine 219–cysteine 230.

Belongs to the MICOS complex subunit Mic19 family. Metazoan Mic25 subfamily. In terms of assembly, component of the mitochondrial contact site and cristae organizing system (MICOS) complex (also known as MINOS or MitOS complex).

It localises to the mitochondrion inner membrane. In terms of biological role, component of the MICOS complex, a large protein complex of the mitochondrial inner membrane that plays crucial roles in the maintenance of crista junctions, inner membrane architecture, and formation of contact sites to the outer membrane. This is MICOS complex subunit mic25 (chchd6) from Xenopus tropicalis (Western clawed frog).